Consider the following 128-residue polypeptide: Fluoride-specific ion channel FluC (128 aa).

A run of 4 helical transmembrane segments spans residues 2–22 (FYSI…RWCL), 35–55 (LGTL…AVVF), 67–87 (LFVI…SVEV), and 96–116 (FGWA…LTAL). The Na(+) site is built by Gly75 and Thr78.

The protein belongs to the fluoride channel Fluc/FEX (TC 1.A.43) family.

Its subcellular location is the cell inner membrane. It catalyses the reaction fluoride(in) = fluoride(out). Na(+) is not transported, but it plays an essential structural role and its presence is essential for fluoride channel function. Fluoride-specific ion channel. Important for reducing fluoride concentration in the cell, thus reducing its toxicity. This is Fluoride-specific ion channel FluC from Burkholderia cenocepacia (strain ATCC BAA-245 / DSM 16553 / LMG 16656 / NCTC 13227 / J2315 / CF5610) (Burkholderia cepacia (strain J2315)).